A 353-amino-acid polypeptide reads, in one-letter code: uncharacterized protein (353 aa).

A signal peptide spans 1–28; sequence MHLTIMRRFAVLLLLAIFLGGCSGSNGA.

This is an uncharacterized protein from Archaeoglobus fulgidus (strain ATCC 49558 / DSM 4304 / JCM 9628 / NBRC 100126 / VC-16).